The chain runs to 1057 residues: Probable E3 ubiquitin-protein ligase HERC4 (1057 aa).

RCC1 repeat units follow at residues 1 to 51 (MLCW…FVLD), 52 to 101 (DGTV…ALND), 102 to 154 (KGQV…ALSK), 156 to 207 (SEVF…VLTL), 208 to 259 (SGAI…ALTK), 261 to 311 (GGVF…AFVP), and 313 to 366 (SGRI…CVKR). The region spanning 730-1057 (KNIDYKKPLK…IDHNEGFSLI (328 aa)) is the HECT domain. The active-site Glycyl thioester intermediate is the Cys-1025.

Its subcellular location is the cytoplasm. The protein localises to the cytosol. It carries out the reaction S-ubiquitinyl-[E2 ubiquitin-conjugating enzyme]-L-cysteine + [acceptor protein]-L-lysine = [E2 ubiquitin-conjugating enzyme]-L-cysteine + N(6)-ubiquitinyl-[acceptor protein]-L-lysine.. It participates in protein modification; protein ubiquitination. Its function is as follows. Probable E3 ubiquitin-protein ligase involved in either protein trafficking or in the distribution of cellular structures. Required for spermatozoon maturation and fertility, and for the removal of the cytoplasmic droplet of the spermatozoon. E3 ubiquitin-protein ligases accept ubiquitin from an E2 ubiquitin-conjugating enzyme in the form of a thioester and then directly transfer it to targeted substrates. The sequence is that of Probable E3 ubiquitin-protein ligase HERC4 (Herc4) from Rattus norvegicus (Rat).